A 325-amino-acid polypeptide reads, in one-letter code: uncharacterized protein (325 aa).

The N-terminal 69 residues, Met1–Ser69, are a transit peptide targeting the chloroplast. Ala70 is subject to N-acetylalanine.

It belongs to the NAD(P)-dependent epimerase/dehydratase family.

It is found in the plastid. The protein localises to the chloroplast. This is an uncharacterized protein from Arabidopsis thaliana (Mouse-ear cress).